Here is a 257-residue protein sequence, read N- to C-terminus: S-methyl-5'-thioadenosine phosphorylase (257 aa).

Residues S10 and R50–H51 contribute to the phosphate site. A substrate-binding site is contributed by M180. Position 181 (T181) interacts with phosphate. D204 to D206 is a binding site for substrate.

The protein belongs to the PNP/MTAP phosphorylase family. MTAP subfamily. In terms of assembly, homohexamer. Dimer of a homotrimer.

The enzyme catalyses S-methyl-5'-thioadenosine + phosphate = 5-(methylsulfanyl)-alpha-D-ribose 1-phosphate + adenine. It functions in the pathway amino-acid biosynthesis; L-methionine biosynthesis via salvage pathway; S-methyl-5-thio-alpha-D-ribose 1-phosphate from S-methyl-5'-thioadenosine (phosphorylase route): step 1/1. Functionally, catalyzes the reversible phosphorylation of S-methyl-5'-thioadenosine (MTA) to adenine and 5-methylthioribose-1-phosphate. Involved in the breakdown of MTA, a major by-product of polyamine biosynthesis. Responsible for the first step in the methionine salvage pathway after MTA has been generated from S-adenosylmethionine. Has broad substrate specificity with 6-aminopurine nucleosides as preferred substrates. The sequence is that of S-methyl-5'-thioadenosine phosphorylase from Pyrococcus horikoshii (strain ATCC 700860 / DSM 12428 / JCM 9974 / NBRC 100139 / OT-3).